The chain runs to 446 residues: Trigger factor (446 aa).

In terms of domain architecture, PPIase FKBP-type spans 163–248 (GDIVTIDFKG…VRGIKRKKLA (86 aa)). Residues 423–446 (SKPVPPREQGAAGETAETAEATPA) form a disordered region. Over residues 432–446 (GAAGETAETAEATPA) the composition is skewed to low complexity.

The protein belongs to the FKBP-type PPIase family. Tig subfamily.

Its subcellular location is the cytoplasm. It catalyses the reaction [protein]-peptidylproline (omega=180) = [protein]-peptidylproline (omega=0). Its function is as follows. Involved in protein export. Acts as a chaperone by maintaining the newly synthesized protein in an open conformation. Functions as a peptidyl-prolyl cis-trans isomerase. The chain is Trigger factor from Moorella thermoacetica (strain ATCC 39073 / JCM 9320).